Consider the following 531-residue polypeptide: Muscarinic acetylcholine receptor M5 (531 aa).

The Extracellular portion of the chain corresponds to 1-28; it reads MEGESYNESTVNGTPVNHQALERHGLWE. N-linked (GlcNAc...) asparagine glycosylation is present at asparagine 7. The chain crosses the membrane as a helical span at residues 29–52; it reads VITIAVVTAVVSLMTIVGNVLVMI. The Cytoplasmic segment spans residues 53 to 65; it reads SFKVNSQLKTVNN. Residues 66-86 traverse the membrane as a helical segment; that stretch reads YYLLSLACADLIIGIFSMNLY. The Extracellular portion of the chain corresponds to 87-103; sequence TTYILMGRWVLGSLACD. Cysteine 102 and cysteine 182 are joined by a disulfide. A helical membrane pass occupies residues 104–125; sequence LWLALDYVASNASVMNLLVISF. The Cytoplasmic portion of the chain corresponds to 126–145; it reads DRYFSITRPLTYRAKRTPKR. Residues 146-168 form a helical membrane-spanning segment; the sequence is AGIMIGLAWLVSFILWAPAILCW. The Extracellular segment spans residues 169–190; the sequence is QYLVGKRTVPPDECQIQFLSEP. Residues 191 to 213 traverse the membrane as a helical segment; that stretch reads TITFGTAIAAFYIPVSVMTILYC. The Cytoplasmic segment spans residues 214-442; sequence RIYRETEKRT…LVKERKAAQT (229 aa). 2 disordered regions span residues 259-295 and 327-346; these read SLAQRERNQASWSSSRRSTSTTGKTTQATDLSADWEK and EAKESPGKESNTQETKETVV. A compositionally biased stretch (low complexity) spans 267–287; it reads QASWSSSRRSTSTTGKTTQAT. Polar residues predominate over residues 334 to 346; the sequence is KESNTQETKETVV. A helical transmembrane segment spans residues 443–463; that stretch reads LSAILLAFIITWTPYNIMVLV. Residues 464–477 lie on the Extracellular side of the membrane; that stretch reads STFCDKCVPVTLWH. The helical transmembrane segment at 478 to 497 threads the bilayer; sequence LGYWLCYVNSTINPICYALC. The Cytoplasmic segment spans residues 498-531; sequence NRTFRKTFKLLLLCRWKKKKVEEKLYWQGNSKLP. Phosphothreonine is present on residues threonine 500 and threonine 504.

It belongs to the G-protein coupled receptor 1 family. Muscarinic acetylcholine receptor subfamily. CHRM5 sub-subfamily.

It localises to the cell membrane. The protein localises to the postsynaptic cell membrane. Its function is as follows. The muscarinic acetylcholine receptor mediates various cellular responses, including inhibition of adenylate cyclase, breakdown of phosphoinositides and modulation of potassium channels through the action of G proteins. Primary transducing effect is Pi turnover. This is Muscarinic acetylcholine receptor M5 (Chrm5) from Rattus norvegicus (Rat).